An 83-amino-acid chain; its full sequence is MKTLLLTLLVVTIVCLDLGYTLECHNQQSSQAPTTTGCSGGETNCYKKGWRDHRGYRIERGCGCPSVKKGIEINCCTTDRCNN.

Residues 1–21 form the signal peptide; it reads MKTLLLTLLVVTIVCLDLGYT. Intrachain disulfides connect Cys24–Cys45, Cys38–Cys62, Cys64–Cys75, and Cys76–Cys81.

It belongs to the three-finger toxin family. Short-chain subfamily. Type I alpha-neurotoxin sub-subfamily. As to expression, expressed by the venom gland.

Its subcellular location is the secreted. In terms of biological role, binds to muscle nicotinic acetylcholine receptor (nAChR) and inhibit acetylcholine from binding to the receptor, thereby impairing neuromuscular transmission. The sequence is that of Alpha-neurotoxin NTX-4 from Naja sputatrix (Malayan spitting cobra).